The chain runs to 231 residues: Small ribosomal subunit protein uS5 (231 aa).

The 64-residue stretch at 61 to 124 (KFRSKKPYRM…NRAKLNIIKV (64 aa)) folds into the S5 DRBM domain.

Belongs to the universal ribosomal protein uS5 family. As to quaternary structure, part of the 30S ribosomal subunit. Contacts protein S4.

Its function is as follows. With S4 and S12 plays an important role in translational accuracy. The polypeptide is Small ribosomal subunit protein uS5 (Nanoarchaeum equitans (strain Kin4-M)).